The following is a 1497-amino-acid chain: Polyunsaturated fatty acid synthase subunit C (1497 aa).

Dehydratase (DH) domain stretches follow at residues 271–422 and 797–937; these read YKLC…DYGK and QGQY…RVRI. The span at 944 to 958 shows a compositional bias: low complexity; the sequence is ASSSASSVGSSASAE. The interval 944–977 is disordered; sequence ASSSASSVGSSASAEVAERTRSKAAPQPVASGPA. The interval 1026 to 1470 is enoylreductase (ER) domain; it reads LGDLGDRSFM…ILRGACYLRR (445 aa).

It belongs to the thioester dehydratase family. FabA subfamily. Component of the polyunsaturated fatty acid synthase complex composed of at least ORF-A, ORF-B and ORF-C.

Its pathway is lipid metabolism; fatty acid biosynthesis. Functionally, polyketide synthase-like protein; part of the polyunsaturated fatty acid synthase composed of the 3 PKS-like subunits A, B and C. While the saturated fatty acids (SFAs) in Thraustochytrium are produced by the conventional fatty acid synthase (FAS) pathway, polyunsaturated fatty acids (PUFAs) including docosahexeanoic acid (DHA) and docosapentaenoic acid (DPA) are synthesized via an anaerobical PKS pathway. PUFA synthase assimilates fatty acyl-CoA, the product of FAS, as the starter unit to synthesize DPA, and this starter unit may be butyryl-CoA, hexanoyl-CoA, or octanoyl-CoA. DPA and DHA biosynthesis seem to differ by the reduction at the N-3 position by PUFA synthase, not the extension of carbon chain. In DHA biosynthesis, PUFA synthase extends the fatty acyl chain from the methyl toward the carboxyl end, and the double bond is formed when the carbon chain is growing, instead of afterward. Therefore, PUFA synthase is unable to transform DPA to DHA, suggesting that DPA is not the precursor of DHA. Moreover, DPA molecule is partly extended by FAS KS domain, so DPA biosynthesis is less dependent on PUFA synthase KS domain than DHA. In Thraustochytrium sp. (strain ATCC 26185 / S-3), this protein is Polyunsaturated fatty acid synthase subunit C.